The sequence spans 692 residues: Elongation factor G (692 aa).

The tr-type G domain maps to Ala8–Leu282. Residues Ala17–Thr24, Asp81–His85, and Asn135–Asp138 contribute to the GTP site.

The protein belongs to the TRAFAC class translation factor GTPase superfamily. Classic translation factor GTPase family. EF-G/EF-2 subfamily.

Its subcellular location is the cytoplasm. Its function is as follows. Catalyzes the GTP-dependent ribosomal translocation step during translation elongation. During this step, the ribosome changes from the pre-translocational (PRE) to the post-translocational (POST) state as the newly formed A-site-bound peptidyl-tRNA and P-site-bound deacylated tRNA move to the P and E sites, respectively. Catalyzes the coordinated movement of the two tRNA molecules, the mRNA and conformational changes in the ribosome. This is Elongation factor G from Streptococcus equi subsp. equi (strain 4047).